The following is a 132-amino-acid chain: Small ribosomal subunit protein uS8 (132 aa).

It belongs to the universal ribosomal protein uS8 family. Part of the 30S ribosomal subunit. Contacts proteins S5 and S12.

Functionally, one of the primary rRNA binding proteins, it binds directly to 16S rRNA central domain where it helps coordinate assembly of the platform of the 30S subunit. The chain is Small ribosomal subunit protein uS8 from Staphylococcus epidermidis (strain ATCC 35984 / DSM 28319 / BCRC 17069 / CCUG 31568 / BM 3577 / RP62A).